The sequence spans 498 residues: Pyruvate kinase (498 aa).

Arg53 contributes to the substrate binding site. K(+)-binding residues include Asn55, Ser57, Asp87, and Thr88. Position 55-58 (55-58 (NFSH)) interacts with ATP. Positions 94 and 178 each coordinate ATP. Glu240 contacts Mg(2+). Residues Gly263, Asp264, and Thr296 each coordinate substrate. Asp264 is a binding site for Mg(2+).

It belongs to the pyruvate kinase family. In terms of assembly, homotetramer. The cofactor is Mg(2+). Requires K(+) as cofactor.

The catalysed reaction is pyruvate + ATP = phosphoenolpyruvate + ADP + H(+). The protein operates within carbohydrate degradation; glycolysis; pyruvate from D-glyceraldehyde 3-phosphate: step 5/5. The chain is Pyruvate kinase (PYK) from Trypanoplasma borreli.